Reading from the N-terminus, the 194-residue chain is Cysteine and glycine-rich protein 3 (194 aa).

The segment at 1–5 (MPNWG) is interaction with TCAP. In terms of domain architecture, LIM zinc-binding 1 spans 10–61 (CGACEKTVYHAEEIQCNGRSFHKTCFHCMACRKALDSTTVAAHESEIYCKVC). The Nuclear localization signal motif lies at 64 to 69 (RRYGPK). The interaction with CLF2 stretch occupies residues 94–105 (QSPKPARAATTS). S95, S111, and S153 each carry phosphoserine. An LIM zinc-binding 2 domain is found at 120–171 (CPRCGKSVYAAEKVMGGGKPWHKTCFRCAICGKSLESTNVTDKDGELYCKVC).

As to quaternary structure, self-associates. Oligomeric in the cytoplasm and monomeric in the nucleus. Homooligomers preferentially form along the actin cytoskeleton. Interacts with TCAP. Interacts with LDHD, MYOD1, MYOG, ACTN2, NRAP, MYF6. Interacts (via N-terminus)D with GLRX3 (via C-terminus) and PPP3CA; GLRX3 and calcineurin compete for interaction with CSRP3. Interacts with CFL2; the stoichiometry influences F-actin depolymerization and possibly two molecules of CFL2 can interact with one molecule of CSRP3 resulting in the highest functional impact; the interaction is stronger with phosphorylated CFL2. Post-translationally, phosphorylated by PKC/PRKCA.

Its subcellular location is the nucleus. It localises to the cytoplasm. It is found in the cytoskeleton. The protein localises to the myofibril. The protein resides in the sarcomere. Its subcellular location is the z line. Positive regulator of myogenesis. Acts as a cofactor for myogenic bHLH transcription factors such as MYOD1, and probably MYOG and MYF6. Enhances the DNA-binding activity of the MYOD1:TCF3 isoform E47 complex and may promote formation of a functional MYOD1:TCF3 isoform E47:MEF2A complex involved in myogenesis. Plays a crucial and specific role in the organization of cytosolic structures in cardiomyocytes. Could play a role in mechanical stretch sensing. May be a scaffold protein that promotes the assembly of interacting proteins at Z-line structures. It is essential for calcineurin anchorage to the Z line. Required for stress-induced calcineurin-NFAT activation. The role in regulation of cytoskeleton dynamics by association with CFL2 is reported conflictingly. Proposed to contribute to the maintenance of muscle cell integrity through an actin-based mechanism. Can directly bind to actin filaments, cross-link actin filaments into bundles without polarity selectivity and protect them from dilution- and cofilin-mediated depolymerization; the function seems to involve its self-association. In vitro can inhibit PKC/PRKCA activity. Proposed to be involved in cardiac stress signaling by down-regulating excessive PKC/PRKCA signaling. This chain is Cysteine and glycine-rich protein 3 (Csrp3), found in Mus musculus (Mouse).